Here is a 156-residue protein sequence, read N- to C-terminus: Small ribosomal subunit protein uS7 (156 aa).

This sequence belongs to the universal ribosomal protein uS7 family. Part of the 30S ribosomal subunit. Contacts proteins S9 and S11.

Its function is as follows. One of the primary rRNA binding proteins, it binds directly to 16S rRNA where it nucleates assembly of the head domain of the 30S subunit. Is located at the subunit interface close to the decoding center, probably blocks exit of the E-site tRNA. The chain is Small ribosomal subunit protein uS7 from Mycoplasma mobile (strain ATCC 43663 / 163K / NCTC 11711) (Mesomycoplasma mobile).